The chain runs to 360 residues: Phenylalanine--tRNA ligase alpha subunit (360 aa).

Glu-260 is a binding site for Mg(2+).

The protein belongs to the class-II aminoacyl-tRNA synthetase family. Phe-tRNA synthetase alpha subunit type 1 subfamily. As to quaternary structure, tetramer of two alpha and two beta subunits. Mg(2+) serves as cofactor.

It is found in the cytoplasm. It catalyses the reaction tRNA(Phe) + L-phenylalanine + ATP = L-phenylalanyl-tRNA(Phe) + AMP + diphosphate + H(+). This Rhodopseudomonas palustris (strain ATCC BAA-98 / CGA009) protein is Phenylalanine--tRNA ligase alpha subunit.